Reading from the N-terminus, the 156-residue chain is Endogenous retrovirus group K member 104 Pro protein (156 aa).

One can recognise a Peptidase A2 domain in the interval 21-96 (FEGLVDTEAD…IPLNLWGQDL (76 aa)). Asp26 is a catalytic residue. The 46-residue stretch at 111 to 156 (YSPTSQKIMTKMGYIPGKGLGKNEDGIKVPVEAKINQKREGIGYPF) folds into the G-patch domain.

Belongs to the peptidase A2 family. HERV class-II K(HML-2) subfamily. As to quaternary structure, active as a homodimer. Post-translationally, autoproteolytically processed at the N-terminus. Expected C-terminal autoprocessing not detected. The sequence shown is that of the processed Pro protein.

The enzyme catalyses Processing at the authentic HIV-1 PR recognition site and release of the mature p17 matrix and the p24 capsid protein, as a result of the cleavage of the -SQNY-|-PIVQ- cleavage site.. Its function is as follows. Retroviral proteases have roles in the processing of the primary translation products and the maturation of the viral particle. Endogenous Pro proteins may have kept, lost or modified their original function during evolution. This chain is Endogenous retrovirus group K member 104 Pro protein (HERV-K104), found in Homo sapiens (Human).